The following is a 59-amino-acid chain: Large ribosomal subunit protein uL30 (59 aa).

Belongs to the universal ribosomal protein uL30 family. Part of the 50S ribosomal subunit.

The chain is Large ribosomal subunit protein uL30 from Persephonella marina (strain DSM 14350 / EX-H1).